Here is a 697-residue protein sequence, read N- to C-terminus: MNKSLGPVSFKDVAVDFTQEEWQQLDPEQKITYRDVMLENYSNLVSVGYHIIKPDVISKLEQGEEPWIVEGEFLLQSYPDEVWQTDDLIERIQEEENKPSRQTVFIETLIEERGNVPGKTFDVETNPVPSRKIAYKNSLCDSCEKCLTSVSEYISSDGSYARMKADECSGCGKSLLHIKLEKTHPGDQAYEFNQNGEPYTLNEESLYQKIRILEKPFEYIECQKAFQKDTVFVNHMEEKPYKWNGSEIAFLQMSDLTVHQTSHMEMKPYECSECGKSFCKKSKFIIHQRTHTGEKPYECNQCGKSFCQKGTLTVHQRTHTGEKPYECNECGKNFYQKLHLIQHQRTHSGEKPYECSYCGKSFCQKTHLTQHQRTHSGERPYVCHDCGKTFSQKSALNDHQKIHTGVKLYKCSECGKCFCRKSTLTTHLRTHTGEKPYECNECGKFFSRLSYLTVHYRTHSGEKPYECNECGKTFYLNSALMRHQRVHTGEKPYECNECGKLFSQLSYLTIHHRTHSGVKPYECSECGKTFYQNSALCRHRRIHKGEKPYECYICGKFFSQMSYLTIHHRIHSGEKPYECSECGKTFCQNSALNRHQRTHTGEKAYECYECGKCFSQMSYLTIHHRIHSGEKPFECNECGKAFSRMSYLTVHYRTHSGEKPYECTECGKKFYHKSAFNSHQRIHRRGNMNVIDVGRLL.

Residue lysine 3 forms a Glycyl lysine isopeptide (Lys-Gly) (interchain with G-Cter in SUMO2) linkage. In terms of domain architecture, KRAB spans 8 to 79 (VSFKDVAVDF…EGEFLLQSYP (72 aa)). Glycyl lysine isopeptide (Lys-Gly) (interchain with G-Cter in SUMO2) cross-links involve residues lysine 98, lysine 179, lysine 182, lysine 209, lysine 215, lysine 224, lysine 239, and lysine 267. 2 C2H2-type zinc fingers span residues 269–291 (YECS…QRTH) and 297–319 (YECN…QRTH). Residues lysine 309, lysine 323, lysine 337, and lysine 365 each participate in a glycyl lysine isopeptide (Lys-Gly) (interchain with G-Cter in SUMO2) cross-link. C2H2-type zinc fingers lie at residues 325–347 (YECN…QRTH), 353–375 (YECS…QRTH), 381–403 (YVCH…QKIH), 409–431 (YKCS…LRTH), 437–459 (YECN…YRTH), 465–487 (YECN…QRVH), 493–515 (YECN…HRTH), and 521–543 (YECS…RRIH). Glycyl lysine isopeptide (Lys-Gly) (interchain with G-Cter in SUMO2) cross-links involve residues lysine 544 and lysine 547. 5 consecutive C2H2-type zinc fingers follow at residues 549–571 (YECY…HRIH), 577–599 (YECS…QRTH), 605–627 (YECY…HRIH), 633–655 (FECN…YRTH), and 661–683 (YECT…QRIH).

It belongs to the krueppel C2H2-type zinc-finger protein family. Widely expressed in various adult tissues and embryonic developmental stages (isoform 3).

Its subcellular location is the nucleus. Functionally, transcriptional repressor which suppresses activation protein 1 (AP-1)- and serum response element (SRE)-mediated transcriptional activity. The polypeptide is Zinc finger protein 12 (ZNF12) (Homo sapiens (Human)).